A 1324-amino-acid chain; its full sequence is MSRRKQAKPQHFQSDPEVASLPRRDGDTEKGQPSRPTKSKDAHVCGRCCAEFFELSDLLLHKKNCTKNQLVLIVNENPASPPETFSPSPPPDNPDEQMNDTVNKTDQVDCSDLSEHNGLDREESMEVEAPVANKSGSGTSSGSHSSTAPSSSSSSSSSSGGGGSSSTGTSAITTSLPQLGDLTTLGNFSVINSNVIIENLQSTKVAVAQFSQEARCGGASGGKLAVPALMEQLLALQQQQIHQLQLIEQIRHQILLLASQNADLPTSSSPSQGTLRTSANPLSTLSSHLSQQLAAAAGLAQSLASQSASISGVKQLPPIQLPQSSSGNTIIPSNSGSSPNMNILAAAVTTPSSEKVASSAGASHVSNPAVSSSSSPAFAISSLLSPASNPLLPQQASANSVFPSPLPNIGTTAEDLNSLSALAQQRKSKPPNVTAFEAKSTSDEAFFKHKCRFCAKVFGSDSALQIHLRSHTGERPFKCNICGNRFSTKGNLKVHFQRHKEKYPHIQMNPYPVPEHLDNIPTSTGIPYGMSIPPEKPVTSWLDTKPVLPTLTTSVGLPLPPTLPSLIPFIKTEEPAPIPISHSATSPPGSVKSDSGGPESATRNLGGLPEEAEGSTLPPSGGKSEESGMVTNSVPTASSSVLSSPAADCGPAGSATTFTNPLLPLMSEQFKAKFPFGGLLDSAQASETSKLQQLVENIDKKATDPNECIICHRVLSCQSALKMHYRTHTGERPFKCKICGRAFTTKGNLKTHYSVHRAMPPLRVQHSCPICQKKFTNAVVLQQHIRMHMGGQIPNTPVPDSYSESMESDTGSFDEKNFDDLDNFSDENMEDCPEGSIPDTPKSADASQDSLSSSPLPLEMSSIAALENQMKMINAGLAEQLQASLKSVENGSIEGDVLTNDSSSVGGDMESQSAGSPAISESTSSMQALSPSNSTQEFHKSPSIEEKPQRAVPSEFANGLSPTPVNGGALDLTSSHAEKIIKEDSLGILFPFRDRGKFKNTACDICGKTFACQSALDIHYRSHTKERPFICTVCNRGFSTKGNLKQHMLTHQMRDLPSQLFEPSSNLGPNQNSAVIPANSLSSLIKTEVNGFVHVSPQDSKDTPTSHVPSGPLSSSATSPVLLPALPRRTPKQHYCNTCGKTFSSSSALQIHERTHTGEKPFACTICGRAFTTKGNLKVHMGTHMWNSTPARRGRRLSVDGPMTFLGGNPVKFPEMFQKDLAARSGSGDPSSFWNQYAAALSNGLAMKANEISVIQNGGIPPIPGSLGSGNSSPVSGLTGNLERLQNSEPNAPLAGLEKMASSENGTNFRFTRFVEDSKEIVTS.

The interval methionine 1–alanine 42 is disordered. The span at proline 22–alanine 42 shows a compositional bias: basic and acidic residues. The C2H2-type 1; atypical zinc finger occupies histidine 43–cysteine 65. 4 disordered regions span residues asparagine 77–valine 102, valine 108–valine 127, alanine 132–isoleucine 172, and proline 317–glycine 336. Positions leucine 113 to serine 124 are enriched in basic and acidic residues. Residues serine 135–serine 158 are compositionally biased toward low complexity. The segment covering leucine 321 to glycine 336 has biased composition (polar residues). A Glycyl lysine isopeptide (Lys-Gly) (interchain with G-Cter in SUMO2) cross-link involves residue lysine 439. 2 C2H2-type zinc fingers span residues histidine 449–histidine 471 and phenylalanine 477–histidine 499. Residues proline 577 to alanine 646 form a disordered region. Phosphoserine occurs at positions 590, 593, and 595. Low complexity predominate over residues serine 633 to alanine 646. Residues lysine 673, lysine 690, and lysine 701 each participate in a glycyl lysine isopeptide (Lys-Gly) (interchain with G-Cter in SUMO2) cross-link. 3 C2H2-type zinc fingers span residues asparagine 706–histidine 728, phenylalanine 734–histidine 756, and histidine 766–histidine 788. Disordered stretches follow at residues glycine 790–leucine 856 and glutamate 894–threonine 963. The segment covering tyrosine 802 to glycine 811 has biased composition (polar residues). Positions aspartate 820–proline 833 are enriched in acidic residues. A compositionally biased stretch (low complexity) spans serine 843–leucine 856. The span at threonine 899 to glutamine 936 shows a compositional bias: polar residues. A compositionally biased stretch (basic and acidic residues) spans glutamate 937–glutamine 949. Phosphoserine occurs at positions 941 and 943. Residues lysine 947 and lysine 982 each participate in a glycyl lysine isopeptide (Lys-Gly) (interchain with G-Cter in SUMO2) cross-link. 2 consecutive C2H2-type zinc fingers follow at residues threonine 1001–histidine 1023 and phenylalanine 1029–histidine 1051. Lysine 1086 is covalently cross-linked (Glycyl lysine isopeptide (Lys-Gly) (interchain with G-Cter in SUMO2)). Residues valine 1095 to proline 1120 are disordered. A compositionally biased stretch (polar residues) spans threonine 1105–serine 1119. 2 consecutive C2H2-type zinc fingers follow at residues histidine 1134 to histidine 1156 and phenylalanine 1162 to histidine 1184. Glycyl lysine isopeptide (Lys-Gly) (interchain with G-Cter in SUMO2) cross-links involve residues lysine 1219, lysine 1299, and lysine 1319.

This sequence belongs to the sal C2H2-type zinc-finger protein family. As to quaternary structure, may associate with NuRD histone deacetylase complex (HDAC). Interacts with components of HDAC complex including HDAC1, HDAC2, RBBP4, RBPP7, MTA1 and MTA2. Interacts with CCNQ. Interacts with NSD2 (via PHD-type zinc fingers 1, 2 and 3). Highest levels in kidney. Lower levels in adult brain (enriched in corpus callosum, lower expression in substantia nigra) and liver.

It is found in the nucleus. Its function is as follows. Transcriptional repressor involved in organogenesis. Plays an essential role in ureteric bud invasion during kidney development. This chain is Sal-like protein 1 (SALL1), found in Homo sapiens (Human).